The primary structure comprises 508 residues: Photosystem II CP47 reaction center protein (508 aa).

Helical transmembrane passes span 21-36 (SVHIMHTALVAGWAGS), 101-115 (IVFSGLCFLAAIWHW), 140-156 (GIHLFLSGVACFGFGAF), 203-218 (IAAGTLGILAGLFHLS), 237-252 (VLSSSIAAVFFAAFVV), and 457-472 (SFALLFFFGHIWHGAR).

It belongs to the PsbB/PsbC family. PsbB subfamily. As to quaternary structure, PSII is composed of 1 copy each of membrane proteins PsbA, PsbB, PsbC, PsbD, PsbE, PsbF, PsbH, PsbI, PsbJ, PsbK, PsbL, PsbM, PsbT, PsbX, PsbY, PsbZ, Psb30/Ycf12, at least 3 peripheral proteins of the oxygen-evolving complex and a large number of cofactors. It forms dimeric complexes. Requires Binds multiple chlorophylls. PSII binds additional chlorophylls, carotenoids and specific lipids. as cofactor.

The protein resides in the plastid. It is found in the chloroplast thylakoid membrane. Its function is as follows. One of the components of the core complex of photosystem II (PSII). It binds chlorophyll and helps catalyze the primary light-induced photochemical processes of PSII. PSII is a light-driven water:plastoquinone oxidoreductase, using light energy to abstract electrons from H(2)O, generating O(2) and a proton gradient subsequently used for ATP formation. The protein is Photosystem II CP47 reaction center protein of Carica papaya (Papaya).